The sequence spans 218 residues: Methylthioribulose-1-phosphate dehydratase (218 aa).

The Zn(2+) site is built by His-107 and His-109.

It belongs to the aldolase class II family. MtnB subfamily. The cofactor is Zn(2+).

The enzyme catalyses 5-(methylsulfanyl)-D-ribulose 1-phosphate = 5-methylsulfanyl-2,3-dioxopentyl phosphate + H2O. The protein operates within amino-acid biosynthesis; L-methionine biosynthesis via salvage pathway; L-methionine from S-methyl-5-thio-alpha-D-ribose 1-phosphate: step 2/6. In terms of biological role, catalyzes the dehydration of methylthioribulose-1-phosphate (MTRu-1-P) into 2,3-diketo-5-methylthiopentyl-1-phosphate (DK-MTP-1-P). The sequence is that of Methylthioribulose-1-phosphate dehydratase from Xylella fastidiosa (strain M12).